We begin with the raw amino-acid sequence, 205 residues long: Thymidylate kinase (205 aa).

11–18 (GVEGSGKS) is a binding site for ATP.

The protein belongs to the thymidylate kinase family.

It catalyses the reaction dTMP + ATP = dTDP + ADP. In terms of biological role, phosphorylation of dTMP to form dTDP in both de novo and salvage pathways of dTTP synthesis. This is Thymidylate kinase from Ruthia magnifica subsp. Calyptogena magnifica.